Reading from the N-terminus, the 129-residue chain is KIYKRCELAAAMKRYGLDNYRGYSLGNWVCAARYESNYNTQATNRNSNGSTDYGILQINSRWWCNDGRTPGTKNLCHISCSALMGADIAPSVRCAKRIVSDGDGMNAWVAWRKHCKGTDVSTWIKDCKL.

A C-type lysozyme domain is found at K1–L129. Cystine bridges form between C6–C127, C30–C115, C64–C80, and C76–C94. Active-site residues include E35 and D52.

It belongs to the glycosyl hydrolase 22 family. Monomer.

Its subcellular location is the secreted. The catalysed reaction is Hydrolysis of (1-&gt;4)-beta-linkages between N-acetylmuramic acid and N-acetyl-D-glucosamine residues in a peptidoglycan and between N-acetyl-D-glucosamine residues in chitodextrins.. Its function is as follows. Lysozymes have primarily a bacteriolytic function; those in tissues and body fluids are associated with the monocyte-macrophage system and enhance the activity of immunoagents. The chain is Lysozyme C (LYZ) from Ortalis vetula (Plain chachalaca).